A 402-amino-acid chain; its full sequence is MNITGIITEYNPFHLGHELHLKSSKEITNCDGVICVMSGNFVQRGLPALTDKWTRTKMALEAGVDLVVELPTLFATSSAEFFAFGAVSLLNSLNVVNNICFGSECGDIDLIKKLSEIIINEPPLFKEYLKDYLKEGLPFPKARSKALMKYLDDNNYKIDFSYLEKVLNSSNNILAIEYCKSLYKLQSSIKPFTIQRLGADYNDEKLSKNEIASASAIRKSIYTSNIEESLDFMPEYSYNLLKNTSFSDLDKMFDLVKYAIVSNPNVLKEIPEASEGIDNKIIQNIGKANSLDELINLCKSKRYSYTRLNRILCHVLLNVNKDLLSLRKSSPNYVRILGFNNKGREILKEIKKNSEINIVNKLSKAKSDSLLEFDIKATNIYSFLNPSVKINSDYLISPIIFR.

Residues 7 to 20 (ITEYNPFHLGHELH), G102, N171, and R196 contribute to the ATP site.

This sequence belongs to the TmcAL family.

The protein resides in the cytoplasm. It carries out the reaction cytidine(34) in elongator tRNA(Met) + acetate + ATP = N(4)-acetylcytidine(34) in elongator tRNA(Met) + AMP + diphosphate. In terms of biological role, catalyzes the formation of N(4)-acetylcytidine (ac(4)C) at the wobble position of elongator tRNA(Met), using acetate and ATP as substrates. First activates an acetate ion to form acetyladenylate (Ac-AMP) and then transfers the acetyl group to tRNA to form ac(4)C34. This chain is tRNA(Met) cytidine acetate ligase, found in Clostridium perfringens (strain ATCC 13124 / DSM 756 / JCM 1290 / NCIMB 6125 / NCTC 8237 / Type A).